A 646-amino-acid polypeptide reads, in one-letter code: Zinc finger protein 493 (646 aa).

Residues 26–48 (FQCDKYVKVFHKLLNSNRHNTKH) form a C2H2-type 1; degenerate zinc finger. 2 C2H2-type zinc fingers span residues 54–76 (FKCK…KRIH) and 82–104 (YRCE…RRVH). A C2H2-type 4; degenerate zinc finger spans residues 109–131 (SYKYECGKSFNQDSNLTTHKRIH). A C2H2-type 5 zinc finger spans residues 137–159 (YKCEECGTSFYQFSYLTRHKLIH). A C2H2-type 6; degenerate zinc finger spans residues 165–187 (YKCEQYGKTFNQSSTLTGHKIIH). Residues 193–215 (YKCEECGKAFSIFSTPTKHKIIH) form a C2H2-type 7; degenerate zinc finger. The C2H2-type 8; degenerate zinc-finger motif lies at 221–243 (HRCEEYCKAYKESSHLTTHKRIH). C2H2-type zinc fingers lie at residues 249–271 (YKCE…KIIH), 277–299 (HRCE…KRIH), 305–327 (YKCE…KIIH), 333–355 (YKCE…RIIH), 361–383 (YKCE…KIIH), 389–411 (YKCE…KMIH), 417–439 (YKCE…KRIH), 445–467 (YKCK…KIIH), 473–495 (YKCE…KKIH), 501–523 (YKCE…KQIH), 529–551 (YKCE…KIIH), 557–579 (YKCE…KIIH), 585–607 (CKCE…KLIH), and 613–635 (YKCE…KIIH).

The protein resides in the nucleus. Its function is as follows. May be involved in transcriptional regulation. The chain is Zinc finger protein 493 (ZNF493) from Homo sapiens (Human).